The primary structure comprises 202 residues: MRTLDKRIAPNVKLAASLVARAPTLTLAYDARCKSRLAATLDTGEDVAVVLPRGTVLRDGDVLVADDGALVRIAAAPETVLLVRAGDPLTLMRAAYHLGNRHTPVEIGDGYLKLEADPVLADMLRRLGTQVEPTSAPFQPEAGAYGGGHKHGHDATFAEDYALAQQVFGEHHGHSHSHDHDHDHDHQHGPGCTHGHRGHDHH.

Basic and acidic residues predominate over residues 171–188; sequence HHGHSHSHDHDHDHDHQH. Residues 171 to 202 form a disordered region; it reads HHGHSHSHDHDHDHDHQHGPGCTHGHRGHDHH.

Belongs to the UreE family.

It localises to the cytoplasm. In terms of biological role, involved in urease metallocenter assembly. Binds nickel. Probably functions as a nickel donor during metallocenter assembly. In Burkholderia ambifaria (strain ATCC BAA-244 / DSM 16087 / CCUG 44356 / LMG 19182 / AMMD) (Burkholderia cepacia (strain AMMD)), this protein is Urease accessory protein UreE.